We begin with the raw amino-acid sequence, 347 residues long: S-adenosylmethionine:tRNA ribosyltransferase-isomerase (347 aa).

Belongs to the QueA family. As to quaternary structure, monomer.

The protein resides in the cytoplasm. The catalysed reaction is 7-aminomethyl-7-carbaguanosine(34) in tRNA + S-adenosyl-L-methionine = epoxyqueuosine(34) in tRNA + adenine + L-methionine + 2 H(+). The protein operates within tRNA modification; tRNA-queuosine biosynthesis. In terms of biological role, transfers and isomerizes the ribose moiety from AdoMet to the 7-aminomethyl group of 7-deazaguanine (preQ1-tRNA) to give epoxyqueuosine (oQ-tRNA). The polypeptide is S-adenosylmethionine:tRNA ribosyltransferase-isomerase (Xylella fastidiosa (strain M12)).